A 466-amino-acid polypeptide reads, in one-letter code: Glutamate-1-semialdehyde 2,1-aminomutase (466 aa).

Lysine 292 carries the N6-(pyridoxal phosphate)lysine modification.

Belongs to the class-III pyridoxal-phosphate-dependent aminotransferase family. HemL subfamily. Homodimer. The cofactor is pyridoxal 5'-phosphate.

It is found in the cytoplasm. The catalysed reaction is (S)-4-amino-5-oxopentanoate = 5-aminolevulinate. Its pathway is porphyrin-containing compound metabolism; protoporphyrin-IX biosynthesis; 5-aminolevulinate from L-glutamyl-tRNA(Glu): step 2/2. The sequence is that of Glutamate-1-semialdehyde 2,1-aminomutase from Tropheryma whipplei (strain TW08/27) (Whipple's bacillus).